We begin with the raw amino-acid sequence, 434 residues long: ATP-dependent RNA helicase SUB2 (434 aa).

Over residues 1–16 (MSGEEDLIDYSDDELN) the composition is skewed to acidic residues. Residues 1 to 32 (MSGEEDLIDYSDDELNNETTAPASNGKKGDAA) are disordered. The Q motif motif lies at 50-78 (TGFRDFLLKPELLRAIADCGFEHPSEVQQ). In terms of domain architecture, Helicase ATP-binding spans 81–256 (IPQAMLGGDI…RKFMQNPTEH (176 aa)). ATP is bound at residue 94 to 101 (AKSGLGKT). The DEAD box motif lies at 203–206 (DECD). Positions 268 to 429 (GLQQYYIPLE…EFPKEGIDAS (162 aa)) constitute a Helicase C-terminal domain.

Belongs to the DEAD box helicase family. DECD subfamily.

The protein resides in the nucleus. It catalyses the reaction ATP + H2O = ADP + phosphate + H(+). In terms of biological role, ATP-binding RNA helicase involved in transcription elongation and required for the export of mRNA out of the nucleus. SUB2 also plays a role in pre-mRNA splicing and spliceosome assembly. May be involved in rDNA and telomeric silencing, and maintenance of genome integrity. This chain is ATP-dependent RNA helicase SUB2 (SUB2), found in Chaetomium globosum (strain ATCC 6205 / CBS 148.51 / DSM 1962 / NBRC 6347 / NRRL 1970) (Soil fungus).